The chain runs to 494 residues: Aspartyl/glutamyl-tRNA(Asn/Gln) amidotransferase subunit B (494 aa).

This sequence belongs to the GatB/GatE family. GatB subfamily. As to quaternary structure, heterotrimer of A, B and C subunits.

The catalysed reaction is L-glutamyl-tRNA(Gln) + L-glutamine + ATP + H2O = L-glutaminyl-tRNA(Gln) + L-glutamate + ADP + phosphate + H(+). It catalyses the reaction L-aspartyl-tRNA(Asn) + L-glutamine + ATP + H2O = L-asparaginyl-tRNA(Asn) + L-glutamate + ADP + phosphate + 2 H(+). Allows the formation of correctly charged Asn-tRNA(Asn) or Gln-tRNA(Gln) through the transamidation of misacylated Asp-tRNA(Asn) or Glu-tRNA(Gln) in organisms which lack either or both of asparaginyl-tRNA or glutaminyl-tRNA synthetases. The reaction takes place in the presence of glutamine and ATP through an activated phospho-Asp-tRNA(Asn) or phospho-Glu-tRNA(Gln). This is Aspartyl/glutamyl-tRNA(Asn/Gln) amidotransferase subunit B from Protochlamydia amoebophila (strain UWE25).